A 1530-amino-acid polypeptide reads, in one-letter code: Brefeldin A resistance protein (1530 aa).

The segment covering 1–26 has biased composition (polar residues); the sequence is MNQNSDTTHGQALGSTLNHTTEVTRI. A disordered region spans residues 1-100; it reads MNQNSDTTHG…SDDSSVDRLA (100 aa). Asn28 is a glycosylation site (N-linked (GlcNAc...) asparagine). Over residues 36–48 the composition is skewed to low complexity; it reads SSSNVDESLDSSN. Residues 54 to 64 are compositionally biased toward basic and acidic residues; that stretch reads KASHTNEEYRS. Asn67 carries N-linked (GlcNAc...) asparagine glycosylation. Low complexity predominate over residues 72 to 93; that stretch reads PSSSNEPSPESSSNSDSSSSDD. Residues 153 to 410 form the ABC transporter 1 domain; the sequence is KTFPDIFLQP…FLDMGFDCHP (258 aa). N-linked (GlcNAc...) asparagine glycans are attached at residues Asn273, Asn334, and Asn450. Phosphoserine occurs at positions 486 and 489. Thr491 is modified (phosphothreonine). 6 helical membrane-spanning segments follow: residues 539–559, 575–595, 620–640, 649–669, 684–704, and 791–811; these read AYIG…GSIF, VLFF…ANMF, LIVD…VLYF, GGFW…SAFF, ALGG…IPNI, and LAII…ASET. The disordered stretch occupies residues 843-864; sequence PLDLETGQDTQGGDVVKESPDN. The ABC transporter 2 domain maps to 882 to 1125; that stretch reads FSWRNLNYDI…LLNYFESHGA (244 aa). 918–925 is a binding site for ATP; the sequence is GESGAGKT. Asn1159 and Asn1175 each carry an N-linked (GlcNAc...) asparagine glycan. Position 1186 is a phosphothreonine (Thr1186). The next 6 helical transmembrane spans lie at 1220-1240, 1255-1275, 1300-1320, 1338-1358, 1367-1387, and 1392-1412; these read ILMS…FTFY, AVFM…PKFI, AIIV…LCWF, YAWL…QAVA, ASVV…VLQP, and VGFW…EGLL. N-linked (GlcNAc...) asparagine glycans are attached at residues Asn1449 and Asn1460. A helical membrane pass occupies residues 1492–1512; it reads GIFVGYVFFNIFAVLLLFYVF.

Belongs to the ABC transporter superfamily. ABCG family. PDR (TC 3.A.1.205) subfamily.

The protein resides in the membrane. In terms of biological role, confers hyper-resistance to brefeldin A (BFA), an inhibitor of intracellular protein transport. Could serve as an efflux pump of various antibiotics. The protein is Brefeldin A resistance protein (bfr1) of Schizosaccharomyces pombe (strain 972 / ATCC 24843) (Fission yeast).